A 211-amino-acid chain; its full sequence is Uracil phosphoribosyltransferase (211 aa).

Residues Arg-78, Arg-103, and 130 to 138 (DPMLATGGT) each bind 5-phospho-alpha-D-ribose 1-diphosphate. Uracil-binding positions include Ile-195 and 200–202 (GDA). Asp-201 provides a ligand contact to 5-phospho-alpha-D-ribose 1-diphosphate.

Belongs to the UPRTase family. The cofactor is Mg(2+).

The catalysed reaction is UMP + diphosphate = 5-phospho-alpha-D-ribose 1-diphosphate + uracil. It participates in pyrimidine metabolism; UMP biosynthesis via salvage pathway; UMP from uracil: step 1/1. Its activity is regulated as follows. Allosterically activated by GTP. Its function is as follows. Catalyzes the conversion of uracil and 5-phospho-alpha-D-ribose 1-diphosphate (PRPP) to UMP and diphosphate. The sequence is that of Uracil phosphoribosyltransferase from Streptomyces avermitilis (strain ATCC 31267 / DSM 46492 / JCM 5070 / NBRC 14893 / NCIMB 12804 / NRRL 8165 / MA-4680).